The following is a 131-amino-acid chain: Small ribosomal subunit protein bS6 (131 aa).

The interval glutamate 98–glutamate 131 is disordered. Over residues arginine 104–glutamate 131 the composition is skewed to basic and acidic residues.

The protein belongs to the bacterial ribosomal protein bS6 family.

Binds together with bS18 to 16S ribosomal RNA. The polypeptide is Small ribosomal subunit protein bS6 (Shewanella putrefaciens (strain CN-32 / ATCC BAA-453)).